Consider the following 339-residue polypeptide: Putative agmatine deiminase (339 aa).

C331 functions as the Amidino-cysteine intermediate in the catalytic mechanism.

Belongs to the agmatine deiminase family.

The catalysed reaction is agmatine + H2O = N-carbamoylputrescine + NH4(+). The chain is Putative agmatine deiminase from Streptomyces coelicolor (strain ATCC BAA-471 / A3(2) / M145).